The sequence spans 177 residues: Tumor necrosis factor ligand superfamily member 18 (177 aa).

The Cytoplasmic segment spans residues 1–27 (MCLSHLENMPLSHSRTQGAQRSSWKLW). The chain crosses the membrane as a helical; Signal-anchor for type II membrane protein span at residues 28–48 (LFCSIVMLLFLCSFSWLIFIF). The THD domain occupies 47-170 (IFLQLETAKE…NNTYWGIILL (124 aa)). Over 49-177 (LQLETAKEPC…ILLANPQFIS (129 aa)) the chain is Extracellular. Cys-58 and Cys-78 are joined by a disulfide. 2 N-linked (GlcNAc...) asparagine glycosylation sites follow: Asn-129 and Asn-161.

The protein belongs to the tumor necrosis factor family. In terms of assembly, homodimer. Homotrimer. In terms of tissue distribution, expressed at high levels in the small intestine, ovary, testis, kidney and endothelial cells.

The protein resides in the cell membrane. Its function is as follows. Cytokine that binds to TNFRSF18/AITR/GITR. Regulates T-cell responses. Can function as costimulator and lower the threshold for T-cell activation and T-cell proliferation. Important for interactions between activated T-lymphocytes and endothelial cells. Mediates activation of NF-kappa-B. Triggers increased phosphorylation of STAT1 and up-regulates expression of VCAM1 and ICAM1. Promotes leukocyte adhesion to endothelial cells. Regulates migration of monocytes from the splenic reservoir to sites of inflammation. The chain is Tumor necrosis factor ligand superfamily member 18 from Homo sapiens (Human).